The sequence spans 507 residues: ATP synthase subunit beta (507 aa).

Residues methionine 1 to asparagine 22 are disordered. Residue glycine 183–threonine 190 participates in ATP binding.

It belongs to the ATPase alpha/beta chains family. In terms of assembly, F-type ATPases have 2 components, CF(1) - the catalytic core - and CF(0) - the membrane proton channel. CF(1) has five subunits: alpha(3), beta(3), gamma(1), delta(1), epsilon(1). CF(0) has three main subunits: a(1), b(2) and c(9-12). The alpha and beta chains form an alternating ring which encloses part of the gamma chain. CF(1) is attached to CF(0) by a central stalk formed by the gamma and epsilon chains, while a peripheral stalk is formed by the delta and b chains.

It localises to the cell inner membrane. It carries out the reaction ATP + H2O + 4 H(+)(in) = ADP + phosphate + 5 H(+)(out). Its function is as follows. Produces ATP from ADP in the presence of a proton gradient across the membrane. The catalytic sites are hosted primarily by the beta subunits. The sequence is that of ATP synthase subunit beta from Ehrlichia chaffeensis (strain ATCC CRL-10679 / Arkansas).